A 108-amino-acid polypeptide reads, in one-letter code: UPF0145 protein YjfJ (108 aa).

The protein belongs to the UPF0145 family.

This chain is UPF0145 protein YjfJ (yjfJ), found in Lactococcus lactis subsp. lactis (strain IL1403) (Streptococcus lactis).